The sequence spans 276 residues: Undecaprenyl-diphosphatase (276 aa).

The next 6 membrane-spanning stretches (helical) occupy residues 43 to 63, 85 to 105, 109 to 129, 184 to 204, 218 to 238, and 254 to 274; these read RAMAFNIIIQLGAILAVVWEF, INLLIAFLPAVVLGVIFADLI, LFNPITVATALVVGGLIMLWA, ATEFSFFLAMPTMVGAAVYSG, VFAIGFVTAFVFAMIAVKGLL, and IAFGLLILATWQFGWVDWTAA.

Belongs to the UppP family.

It is found in the cell inner membrane. It carries out the reaction di-trans,octa-cis-undecaprenyl diphosphate + H2O = di-trans,octa-cis-undecaprenyl phosphate + phosphate + H(+). Functionally, catalyzes the dephosphorylation of undecaprenyl diphosphate (UPP). Confers resistance to bacitracin. The chain is Undecaprenyl-diphosphatase from Pseudomonas fluorescens (strain ATCC BAA-477 / NRRL B-23932 / Pf-5).